A 34-amino-acid polypeptide reads, in one-letter code: Turripeptide OL127 (34 aa).

Post-translationally, contains 4 disulfide bonds. In terms of tissue distribution, expressed by the venom duct.

The protein localises to the secreted. In terms of biological role, acts as a neurotoxin by inhibiting an ion channel. The protein is Turripeptide OL127 of Iotyrris olangoensis (Sea snail).